A 391-amino-acid polypeptide reads, in one-letter code: Imidazolonepropionase (391 aa).

Fe(3+) is bound by residues histidine 72 and histidine 74. The Zn(2+) site is built by histidine 72 and histidine 74. 4-imidazolone-5-propanoate contacts are provided by arginine 81, tyrosine 139, and histidine 166. Position 139 (tyrosine 139) interacts with N-formimidoyl-L-glutamate. Histidine 229 is a binding site for Fe(3+). Histidine 229 contributes to the Zn(2+) binding site. Glutamine 232 is a binding site for 4-imidazolone-5-propanoate. Residue aspartate 303 coordinates Fe(3+). Aspartate 303 is a Zn(2+) binding site. N-formimidoyl-L-glutamate is bound by residues asparagine 305 and glycine 307. Residue serine 308 participates in 4-imidazolone-5-propanoate binding.

It belongs to the metallo-dependent hydrolases superfamily. HutI family. Requires Zn(2+) as cofactor. It depends on Fe(3+) as a cofactor.

It is found in the cytoplasm. The catalysed reaction is 4-imidazolone-5-propanoate + H2O = N-formimidoyl-L-glutamate. Its pathway is amino-acid degradation; L-histidine degradation into L-glutamate; N-formimidoyl-L-glutamate from L-histidine: step 3/3. Catalyzes the hydrolytic cleavage of the carbon-nitrogen bond in imidazolone-5-propanoate to yield N-formimidoyl-L-glutamate. It is the third step in the universal histidine degradation pathway. This Streptomyces coelicolor (strain ATCC BAA-471 / A3(2) / M145) protein is Imidazolonepropionase.